The primary structure comprises 332 residues: ATP-dependent 6-phosphofructokinase (332 aa).

An ATP-binding site is contributed by G11. 21–25 serves as a coordination point for ADP; it reads RSVVR. Residues 72-73 and 102-105 each bind ATP; these read RC and GDGS. Position 103 (D103) interacts with Mg(2+). 126-128 provides a ligand contact to substrate; sequence TID. The Proton acceptor role is filled by D128. R155 contacts ADP. Substrate-binding positions include R163 and 170-172; that span reads MGR. Residues 186-188, R212, and 214-216 each bind ADP; these read GAE and KLH. Substrate-binding positions include E223, R256, and 262-265; that span reads HIQR.

Belongs to the phosphofructokinase type A (PFKA) family. ATP-dependent PFK group I subfamily. Prokaryotic clade 'B1' sub-subfamily. Homotetramer. Mg(2+) is required as a cofactor.

The protein resides in the cytoplasm. The enzyme catalyses beta-D-fructose 6-phosphate + ATP = beta-D-fructose 1,6-bisphosphate + ADP + H(+). Its pathway is carbohydrate degradation; glycolysis; D-glyceraldehyde 3-phosphate and glycerone phosphate from D-glucose: step 3/4. Allosterically activated by ADP and other diphosphonucleosides, and allosterically inhibited by phosphoenolpyruvate. In terms of biological role, catalyzes the phosphorylation of D-fructose 6-phosphate to fructose 1,6-bisphosphate by ATP, the first committing step of glycolysis. In Halothermothrix orenii (strain H 168 / OCM 544 / DSM 9562), this protein is ATP-dependent 6-phosphofructokinase.